A 525-amino-acid chain; its full sequence is Cytochrome P450 703A2 (525 aa).

A helical membrane pass occupies residues 3–23; the sequence is PFLLSIILCSWIFVVVSWKKL. Position 455 (Cys-455) interacts with heme.

This sequence belongs to the cytochrome P450 family. Heme is required as a cofactor.

Its subcellular location is the membrane. The catalysed reaction is dodecanoate + reduced [NADPH--hemoprotein reductase] + O2 = 7-hydroxydodecanoate + oxidized [NADPH--hemoprotein reductase] + H2O + H(+). In terms of biological role, involved in pollen exine and anther epicuticular layer development. Catalyzes the in-chain hydroxylation of lauric acid (C12:0) preferentially on position 7, generating 7-hydroxylated lauric acid. Does not possess activity with other fatty acids (C14:0, C16:0, C16:1, and C18:0). Participates in a conserved pathway of in-chain hydroxylation of lauric acid required for anther cuticle and pollen exine formation. Directly regulated by TDR, a known regulator of tapetum programmed cell death (PCD) and pollen exine formation. This chain is Cytochrome P450 703A2, found in Oryza sativa subsp. japonica (Rice).